The sequence spans 161 residues: Nucleotide-binding protein PputW619_0959 (161 aa).

This sequence belongs to the YajQ family.

Nucleotide-binding protein. This Pseudomonas putida (strain W619) protein is Nucleotide-binding protein PputW619_0959.